We begin with the raw amino-acid sequence, 74 residues long: Kappa-scoloptoxin(07)-Ssm2f (74 aa).

The signal sequence occupies residues 1-19; the sequence is MLVFYAILFVTVFSNTVMG. The propeptide occupies 20–41; the sequence is ATIDKPIPKPIFREAIEEMEVN.

It belongs to the scoloptoxin-07 family. In terms of processing, contains 3 disulfide bonds. As to expression, expressed by the venom gland.

It is found in the secreted. In terms of biological role, inhibits voltage-gated potassium channels. The chain is Kappa-scoloptoxin(07)-Ssm2f from Scolopendra mutilans (Chinese red-headed centipede).